Reading from the N-terminus, the 1487-residue chain is Protein clueless (1487 aa).

2 disordered regions span residues 1–94 (MALE…NGDA) and 110–140 (GATA…EAAA). The span at 56–65 (TKKKGKKNRN) shows a compositional bias: basic residues. Low complexity predominate over residues 111–126 (ATAAAGATEAAAEVGS). Position 284 is a phosphoserine (Ser-284). The region spanning 438–680 (RAEDAFSSKL…RTFPPDVNFL (243 aa)) is the Clu domain. Over residues 739-785 (QAEKELPSITEKQEEPEKEQAEKSSAEQPEKEKEKEKDKEDEQKESK) the composition is skewed to basic and acidic residues. Disordered regions lie at residues 739–794 (QAEK…TKSA) and 980–1040 (VSSE…TAST). The span at 988–1005 (KQSRNNGGKHNKHNKSNK) shows a compositional bias: basic residues. Residues 1009 to 1019 (PQSTSAAAATQ) are compositionally biased toward polar residues. Low complexity predominate over residues 1020 to 1040 (NGHSSTAANGSANSAANTAST). 3 TPR repeats span residues 1140-1173 (AYNF…LNNV), 1266-1299 (ALID…NLKY), and 1301-1334 (GNKA…EKET). The disordered stretch occupies residues 1456–1487 (DTEQPKEGSEVEGATATQLTNGSEDSTTTVSS). Over residues 1470–1487 (TATQLTNGSEDSTTTVSS) the composition is skewed to polar residues.

The protein belongs to the CLU family.

It is found in the cytoplasm. Its function is as follows. mRNA-binding protein involved in proper cytoplasmic distribution of mitochondria. The polypeptide is Protein clueless (Drosophila mojavensis (Fruit fly)).